A 129-amino-acid polypeptide reads, in one-letter code: ATP synthase epsilon chain (129 aa).

It belongs to the ATPase epsilon chain family. F-type ATPases have 2 components, CF(1) - the catalytic core - and CF(0) - the membrane proton channel. CF(1) has five subunits: alpha(3), beta(3), gamma(1), delta(1), epsilon(1). CF(0) has three main subunits: a, b and c.

Its subcellular location is the cell inner membrane. Its function is as follows. Produces ATP from ADP in the presence of a proton gradient across the membrane. The polypeptide is ATP synthase epsilon chain (Campylobacter curvus (strain 525.92)).